The primary structure comprises 127 residues: Riboflavin kinase (127 aa).

Residue 10-15 (GLGEGR) participates in CDP binding. Residues threonine 39 and asparagine 41 each coordinate Mg(2+). Threonine 96 and glutamate 104 together coordinate FMN. A CDP-binding site is contributed by 109 to 112 (IQLR).

The protein belongs to the archaeal riboflavin kinase family. The cofactor is Mg(2+).

The catalysed reaction is riboflavin + CTP = CDP + FMN + H(+). It functions in the pathway cofactor biosynthesis; FMN biosynthesis; FMN from riboflavin (CTP route): step 1/1. Catalyzes the CTP-dependent phosphorylation of riboflavin (vitamin B2) to form flavin mononucleotide (FMN). The chain is Riboflavin kinase from Methanococcus maripaludis (strain C5 / ATCC BAA-1333).